A 311-amino-acid polypeptide reads, in one-letter code: MQENQQITKKEQYNLNKLQKRLRRNVGEAIADFNMIEEGDRIMVCLSGGKDSYTMLEILRNLQQSAPINFSLVAVNLDQKQPGFPEHVLPVYLEKLGVEYKIVEENTYGIVKEKIPEGKTTCSLCSRLRRGILYRTATELGATKIALGHHRDDILQTLFLNMFYGGKMKGMPPKLMSDDGKHIVIRPLAYCREKDIQRFADAKAFPIIPCNLCGSQPNLQRQVIADMLRDWDKRYPGRIETMFSAMQNVVPSHLCDTNLFDFKGITHGSEVVNGGDLAFDREEIPLQPAGWQPEEEENQLDELRLNVVEVK.

Positions 47 to 52 (SGGKDS) match the PP-loop motif motif. 3 residues coordinate [4Fe-4S] cluster: Cys-122, Cys-125, and Cys-213.

The protein belongs to the TtcA family. In terms of assembly, homodimer. Requires Mg(2+) as cofactor. The cofactor is [4Fe-4S] cluster.

It localises to the cytoplasm. The enzyme catalyses cytidine(32) in tRNA + S-sulfanyl-L-cysteinyl-[cysteine desulfurase] + AH2 + ATP = 2-thiocytidine(32) in tRNA + L-cysteinyl-[cysteine desulfurase] + A + AMP + diphosphate + H(+). The protein operates within tRNA modification. Functionally, catalyzes the ATP-dependent 2-thiolation of cytidine in position 32 of tRNA, to form 2-thiocytidine (s(2)C32). The sulfur atoms are provided by the cysteine/cysteine desulfurase (IscS) system. The chain is tRNA-cytidine(32) 2-sulfurtransferase from Shigella boydii serotype 18 (strain CDC 3083-94 / BS512).